A 133-amino-acid polypeptide reads, in one-letter code: uncharacterized protein (133 aa).

The disordered stretch occupies residues 44–79; it reads VENQLASSKTEEQTLKISKKSNLNPAQKSSTFGLEN. Over residues 63–79 the composition is skewed to polar residues; it reads KSNLNPAQKSSTFGLEN.

It is found in the plastid. The protein localises to the chloroplast. This is an uncharacterized protein from Chlorella vulgaris (Green alga).